Consider the following 101-residue polypeptide: Urease subunit beta (101 aa).

This sequence belongs to the urease beta subunit family. In terms of assembly, heterotrimer of UreA (gamma), UreB (beta) and UreC (alpha) subunits. Three heterotrimers associate to form the active enzyme.

The protein resides in the cytoplasm. The catalysed reaction is urea + 2 H2O + H(+) = hydrogencarbonate + 2 NH4(+). The protein operates within nitrogen metabolism; urea degradation; CO(2) and NH(3) from urea (urease route): step 1/1. The chain is Urease subunit beta from Hahella chejuensis (strain KCTC 2396).